A 470-amino-acid chain; its full sequence is 6-phospho-beta-galactosidase 1 (470 aa).

D-galactose 6-phosphate contacts are provided by glutamine 23, histidine 120, asparagine 163, glutamate 164, and asparagine 300. Glutamate 164 functions as the Proton donor in the catalytic mechanism. Glutamate 378 (nucleophile) is an active-site residue. D-galactose 6-phosphate-binding residues include serine 434, tryptophan 435, lysine 441, and tyrosine 443.

The protein belongs to the glycosyl hydrolase 1 family.

It catalyses the reaction a 6-phospho-beta-D-galactoside + H2O = D-galactose 6-phosphate + an alcohol. The protein operates within carbohydrate metabolism; lactose degradation; D-galactose 6-phosphate and beta-D-glucose from lactose 6-phosphate: step 1/1. The sequence is that of 6-phospho-beta-galactosidase 1 from Streptococcus pneumoniae (strain ATCC BAA-255 / R6).